Here is a 204-residue protein sequence, read N- to C-terminus: Large ribosomal subunit protein eL15 (204 aa).

This sequence belongs to the eukaryotic ribosomal protein eL15 family. As to quaternary structure, component of the large ribosomal subunit.

The protein localises to the cytoplasm. Component of the large ribosomal subunit. The ribosome is a large ribonucleoprotein complex responsible for the synthesis of proteins in the cell. This chain is Large ribosomal subunit protein eL15 (rpl15), found in Hypophthalmichthys nobilis (Bighead carp).